Consider the following 454-residue polypeptide: Bifunctional protein GlmU (454 aa).

Residues 1 to 226 (MALNVVILAA…AVEVEGANNR (226 aa)) form a pyrophosphorylase region. UDP-N-acetyl-alpha-D-glucosamine-binding positions include 8–11 (LAAG), Lys22, Gln73, 78–79 (GT), 100–102 (YGD), Gly137, Glu151, Asn166, and Asn224. Asp102 is a binding site for Mg(2+). Residue Asn224 participates in Mg(2+) binding. Residues 227–247 (VQLAQLERAYQARAAEKLMLE) form a linker region. Residues 248-454 (GANLRDPARI…GWPRPVKLKK (207 aa)) are N-acetyltransferase. Arg330 and Lys348 together coordinate UDP-N-acetyl-alpha-D-glucosamine. Catalysis depends on His360, which acts as the Proton acceptor. UDP-N-acetyl-alpha-D-glucosamine contacts are provided by Tyr363 and Asn374. Acetyl-CoA is bound by residues Ala377, 383–384 (NY), Ser402, Ala420, and Arg437.

In the N-terminal section; belongs to the N-acetylglucosamine-1-phosphate uridyltransferase family. It in the C-terminal section; belongs to the transferase hexapeptide repeat family. As to quaternary structure, homotrimer. Mg(2+) serves as cofactor.

It is found in the cytoplasm. The enzyme catalyses alpha-D-glucosamine 1-phosphate + acetyl-CoA = N-acetyl-alpha-D-glucosamine 1-phosphate + CoA + H(+). It carries out the reaction N-acetyl-alpha-D-glucosamine 1-phosphate + UTP + H(+) = UDP-N-acetyl-alpha-D-glucosamine + diphosphate. Its pathway is nucleotide-sugar biosynthesis; UDP-N-acetyl-alpha-D-glucosamine biosynthesis; N-acetyl-alpha-D-glucosamine 1-phosphate from alpha-D-glucosamine 6-phosphate (route II): step 2/2. It participates in nucleotide-sugar biosynthesis; UDP-N-acetyl-alpha-D-glucosamine biosynthesis; UDP-N-acetyl-alpha-D-glucosamine from N-acetyl-alpha-D-glucosamine 1-phosphate: step 1/1. The protein operates within bacterial outer membrane biogenesis; LPS lipid A biosynthesis. In terms of biological role, catalyzes the last two sequential reactions in the de novo biosynthetic pathway for UDP-N-acetylglucosamine (UDP-GlcNAc). The C-terminal domain catalyzes the transfer of acetyl group from acetyl coenzyme A to glucosamine-1-phosphate (GlcN-1-P) to produce N-acetylglucosamine-1-phosphate (GlcNAc-1-P), which is converted into UDP-GlcNAc by the transfer of uridine 5-monophosphate (from uridine 5-triphosphate), a reaction catalyzed by the N-terminal domain. The sequence is that of Bifunctional protein GlmU from Shewanella pealeana (strain ATCC 700345 / ANG-SQ1).